The sequence spans 340 residues: Phosphoribosylformylglycinamidine cyclo-ligase (340 aa).

The protein belongs to the AIR synthase family.

It localises to the cytoplasm. It catalyses the reaction 2-formamido-N(1)-(5-O-phospho-beta-D-ribosyl)acetamidine + ATP = 5-amino-1-(5-phospho-beta-D-ribosyl)imidazole + ADP + phosphate + H(+). It participates in purine metabolism; IMP biosynthesis via de novo pathway; 5-amino-1-(5-phospho-D-ribosyl)imidazole from N(2)-formyl-N(1)-(5-phospho-D-ribosyl)glycinamide: step 2/2. The polypeptide is Phosphoribosylformylglycinamidine cyclo-ligase (Streptococcus pneumoniae serotype 4 (strain ATCC BAA-334 / TIGR4)).